The chain runs to 505 residues: Putative thymidine phosphorylase (505 aa).

This sequence belongs to the thymidine/pyrimidine-nucleoside phosphorylase family. Type 2 subfamily.

The catalysed reaction is thymidine + phosphate = 2-deoxy-alpha-D-ribose 1-phosphate + thymine. The chain is Putative thymidine phosphorylase from Tolumonas auensis (strain DSM 9187 / NBRC 110442 / TA 4).